The chain runs to 172 residues: MAEKRNIFLVGPMGAGKSTIGRHIADQLHLEFVDSDQEIERRTGADIAWVFDLEGEEGFRLREESVIGDLTEMQGIVLATGGGSVMSKEVRNKLSARGIVVYLETPIEKQVARTQRDKRRPLLQTEEAPRDVLERLAEEREPLYKEVADFVVRTDEQSAKVVANQIIEKLDF.

Residue glycine 14–threonine 19 participates in ATP binding. Residue serine 18 participates in Mg(2+) binding. 3 residues coordinate substrate: aspartate 36, arginine 60, and glycine 82. Position 120 (arginine 120) interacts with ATP. Arginine 140 contacts substrate. Glutamine 157 serves as a coordination point for ATP.

Belongs to the shikimate kinase family. In terms of assembly, monomer. Mg(2+) serves as cofactor.

Its subcellular location is the cytoplasm. The enzyme catalyses shikimate + ATP = 3-phosphoshikimate + ADP + H(+). Its pathway is metabolic intermediate biosynthesis; chorismate biosynthesis; chorismate from D-erythrose 4-phosphate and phosphoenolpyruvate: step 5/7. Catalyzes the specific phosphorylation of the 3-hydroxyl group of shikimic acid using ATP as a cosubstrate. This Pseudoalteromonas translucida (strain TAC 125) protein is Shikimate kinase.